A 238-amino-acid polypeptide reads, in one-letter code: tRNA (guanine-N(7)-)-methyltransferase (238 aa).

The S-adenosyl-L-methionine site is built by Glu70, Asp95, Asp122, and Asp145. Residue Asp145 is part of the active site. Substrate is bound by residues Lys149, Asp181, and 216–219 (TKFE).

Belongs to the class I-like SAM-binding methyltransferase superfamily. TrmB family.

The enzyme catalyses guanosine(46) in tRNA + S-adenosyl-L-methionine = N(7)-methylguanosine(46) in tRNA + S-adenosyl-L-homocysteine. The protein operates within tRNA modification; N(7)-methylguanine-tRNA biosynthesis. In terms of biological role, catalyzes the formation of N(7)-methylguanine at position 46 (m7G46) in tRNA. This Neisseria meningitidis serogroup C / serotype 2a (strain ATCC 700532 / DSM 15464 / FAM18) protein is tRNA (guanine-N(7)-)-methyltransferase.